The sequence spans 218 residues: Pyridoxine/pyridoxamine 5'-phosphate oxidase (218 aa).

Substrate-binding positions include 12-15 and R70; that span reads RLSY. FMN is bound by residues 65–70, 80–81, K87, and Q109; these read RTVLLR and YT. Residues Y127, R131, and S135 each coordinate substrate. Residues 145–146 and W191 contribute to the FMN site; that span reads QS. Substrate is bound at residue 197–199; the sequence is RLH. Residue R201 participates in FMN binding.

It belongs to the pyridoxamine 5'-phosphate oxidase family. Homodimer. FMN serves as cofactor.

It carries out the reaction pyridoxamine 5'-phosphate + O2 + H2O = pyridoxal 5'-phosphate + H2O2 + NH4(+). It catalyses the reaction pyridoxine 5'-phosphate + O2 = pyridoxal 5'-phosphate + H2O2. It participates in cofactor metabolism; pyridoxal 5'-phosphate salvage; pyridoxal 5'-phosphate from pyridoxamine 5'-phosphate: step 1/1. It functions in the pathway cofactor metabolism; pyridoxal 5'-phosphate salvage; pyridoxal 5'-phosphate from pyridoxine 5'-phosphate: step 1/1. Catalyzes the oxidation of either pyridoxine 5'-phosphate (PNP) or pyridoxamine 5'-phosphate (PMP) into pyridoxal 5'-phosphate (PLP). The protein is Pyridoxine/pyridoxamine 5'-phosphate oxidase of Acinetobacter baumannii (strain SDF).